A 421-amino-acid chain; its full sequence is Enolase 1 (421 aa).

Position 164 (Gln-164) interacts with (2R)-2-phosphoglycerate. The active-site Proton donor is the Glu-206. Mg(2+) contacts are provided by Asp-243, Glu-287, and Asp-314. Residues Lys-339, Arg-368, Ser-369, and Lys-390 each contribute to the (2R)-2-phosphoglycerate site. Lys-339 (proton acceptor) is an active-site residue.

Belongs to the enolase family. As to quaternary structure, component of the RNA degradosome, a multiprotein complex involved in RNA processing and mRNA degradation. Requires Mg(2+) as cofactor.

It localises to the cytoplasm. The protein localises to the secreted. The protein resides in the cell surface. It carries out the reaction (2R)-2-phosphoglycerate = phosphoenolpyruvate + H2O. It functions in the pathway carbohydrate degradation; glycolysis; pyruvate from D-glyceraldehyde 3-phosphate: step 4/5. In terms of biological role, catalyzes the reversible conversion of 2-phosphoglycerate (2-PG) into phosphoenolpyruvate (PEP). It is essential for the degradation of carbohydrates via glycolysis. The sequence is that of Enolase 1 from Methylococcus capsulatus (strain ATCC 33009 / NCIMB 11132 / Bath).